Reading from the N-terminus, the 190-residue chain is Large ribosomal subunit protein uL6 (190 aa).

The protein belongs to the universal ribosomal protein uL6 family.

The polypeptide is Large ribosomal subunit protein uL6 (RpL9) (Spodoptera frugiperda (Fall armyworm)).